Here is a 377-residue protein sequence, read N- to C-terminus: Succinyl-diaminopimelate desuccinylase (377 aa).

His66 serves as a coordination point for Zn(2+). Asp68 is an active-site residue. Zn(2+) is bound at residue Asp99. Residue Glu133 is the Proton acceptor of the active site. 3 residues coordinate Zn(2+): Glu134, Glu162, and His348.

Belongs to the peptidase M20A family. DapE subfamily. As to quaternary structure, homodimer. It depends on Zn(2+) as a cofactor. The cofactor is Co(2+).

It carries out the reaction N-succinyl-(2S,6S)-2,6-diaminopimelate + H2O = (2S,6S)-2,6-diaminopimelate + succinate. It functions in the pathway amino-acid biosynthesis; L-lysine biosynthesis via DAP pathway; LL-2,6-diaminopimelate from (S)-tetrahydrodipicolinate (succinylase route): step 3/3. In terms of biological role, catalyzes the hydrolysis of N-succinyl-L,L-diaminopimelic acid (SDAP), forming succinate and LL-2,6-diaminopimelate (DAP), an intermediate involved in the bacterial biosynthesis of lysine and meso-diaminopimelic acid, an essential component of bacterial cell walls. In Marinomonas sp. (strain MWYL1), this protein is Succinyl-diaminopimelate desuccinylase.